The primary structure comprises 238 residues: Endonuclease V (238 aa).

Residues Asp46 and Asp116 each coordinate Mg(2+).

It belongs to the endonuclease V family. Mg(2+) serves as cofactor.

Its subcellular location is the cytoplasm. The enzyme catalyses Endonucleolytic cleavage at apurinic or apyrimidinic sites to products with a 5'-phosphate.. DNA repair enzyme involved in the repair of deaminated bases. Selectively cleaves double-stranded DNA at the second phosphodiester bond 3' to a deoxyinosine leaving behind the intact lesion on the nicked DNA. This chain is Endonuclease V, found in Bacillus subtilis (strain 168).